The chain runs to 451 residues: C4-dicarboxylate transport protein (451 aa).

9 helical membrane passes run 17-37 (SLYV…HFYP), 53-73 (LIKM…IAGM), 85-105 (LALL…LIVV), 153-173 (AFAK…GFAL), 193-213 (VLFT…FGAM), 231-251 (LMGS…GLIA), 306-326 (GYSF…VFIA), 339-359 (ITLL…TGSG), and 361-381 (IVLA…LALI).

The protein belongs to the dicarboxylate/amino acid:cation symporter (DAACS) (TC 2.A.23) family.

Its subcellular location is the cell inner membrane. Functionally, responsible for the transport of dicarboxylates such as succinate, fumarate, and malate from the periplasm across the membrane. This is C4-dicarboxylate transport protein from Paracidovorax citrulli (strain AAC00-1) (Acidovorax citrulli).